Consider the following 160-residue polypeptide: Cyclic pyranopterin monophosphate synthase (160 aa).

Residues 77–79 (MCH) and 114–115 (ME) each bind substrate. Aspartate 129 is a catalytic residue.

The protein belongs to the MoaC family. Homohexamer; trimer of dimers.

It carries out the reaction (8S)-3',8-cyclo-7,8-dihydroguanosine 5'-triphosphate = cyclic pyranopterin phosphate + diphosphate. Its pathway is cofactor biosynthesis; molybdopterin biosynthesis. In terms of biological role, catalyzes the conversion of (8S)-3',8-cyclo-7,8-dihydroguanosine 5'-triphosphate to cyclic pyranopterin monophosphate (cPMP). This is Cyclic pyranopterin monophosphate synthase from Listeria monocytogenes serotype 4b (strain F2365).